The following is a 266-amino-acid chain: Oxygen-evolving enhancer protein 2-3, chloroplastic (266 aa).

The transit peptide at 1–80 (MASTQCFLHH…VGSKVSPADA (80 aa)) directs the protein to the chloroplast.

It belongs to the PsbP family.

It localises to the plastid. It is found in the chloroplast thylakoid membrane. Functionally, may be involved in the regulation of photosystem II. The protein is Oxygen-evolving enhancer protein 2-3, chloroplastic (PSBP3) of Nicotiana tabacum (Common tobacco).